We begin with the raw amino-acid sequence, 246 residues long: Small ribosomal subunit protein uS2 (246 aa).

It belongs to the universal ribosomal protein uS2 family.

This is Small ribosomal subunit protein uS2 from Dictyoglomus turgidum (strain DSM 6724 / Z-1310).